The chain runs to 297 residues: 4-hydroxy-tetrahydrodipicolinate synthase (297 aa).

Pyruvate is bound at residue Thr46. Tyr134 (proton donor/acceptor) is an active-site residue. The active-site Schiff-base intermediate with substrate is Lys162. Ile209 serves as a coordination point for pyruvate.

Belongs to the DapA family. Homotetramer; dimer of dimers.

It is found in the cytoplasm. The enzyme catalyses L-aspartate 4-semialdehyde + pyruvate = (2S,4S)-4-hydroxy-2,3,4,5-tetrahydrodipicolinate + H2O + H(+). The protein operates within amino-acid biosynthesis; L-lysine biosynthesis via DAP pathway; (S)-tetrahydrodipicolinate from L-aspartate: step 3/4. Catalyzes the condensation of (S)-aspartate-beta-semialdehyde [(S)-ASA] and pyruvate to 4-hydroxy-tetrahydrodipicolinate (HTPA). The sequence is that of 4-hydroxy-tetrahydrodipicolinate synthase from Methanosphaera stadtmanae (strain ATCC 43021 / DSM 3091 / JCM 11832 / MCB-3).